The following is a 93-amino-acid chain: DNA-directed RNA polymerase subunit omega (93 aa).

It belongs to the RNA polymerase subunit omega family. As to quaternary structure, the RNAP catalytic core consists of 2 alpha, 1 beta, 1 beta' and 1 omega subunit. When a sigma factor is associated with the core the holoenzyme is formed, which can initiate transcription.

It carries out the reaction RNA(n) + a ribonucleoside 5'-triphosphate = RNA(n+1) + diphosphate. Functionally, promotes RNA polymerase assembly. Latches the N- and C-terminal regions of the beta' subunit thereby facilitating its interaction with the beta and alpha subunits. The protein is DNA-directed RNA polymerase subunit omega of Actinobacillus pleuropneumoniae serotype 3 (strain JL03).